The following is a 1191-amino-acid chain: Rho GTPase-activating protein 20 (1191 aa).

Positions 1–23 (MEAMSPQQETLGGQPGRSSSLTG) are enriched in polar residues. Residues 1 to 45 (MEAMSPQQETLGGQPGRSSSLTGVSRLAGGSCTKKKMKTLAERRR) are disordered. A Phosphoserine modification is found at Ser46. Residues 78 to 180 (SLVCSNRTLL…EQKDKWLSLL (103 aa)) enclose the PH domain. The Ras-associating domain maps to 194-295 (KSIPLKIFAK…TPFNLQEPFL (102 aa)). The Rho-GAP domain occupies 365–551 (ISLPNICEND…FLIENCLRIF (187 aa)). Ser704 and Ser730 each carry phosphoserine. Disordered stretches follow at residues 768–791 (SKKNATTQNTKKKSLSGSEGNHVK), 926–1014 (RLNL…SRPA), 1052–1123 (KKAK…RHCS), and 1140–1191 (HEEI…TKDI). Low complexity predominate over residues 934 to 961 (SYSSLSSPGTSPSGSSVSSQDSAFSQIS). 2 stretches are compositionally biased toward polar residues: residues 962-981 (EHSVFTPTETSSPIDCTFQA) and 1103-1116 (PVQSAQRCSSSPFQ). Residues 1182-1191 (IEDRYLTKDI) are compositionally biased toward basic and acidic residues.

In terms of tissue distribution, expressed predominantly in the brain. Lower expression is found in lymph nodes.

Functionally, GTPase activator for the Rho-type GTPases by converting them to an inactive GDP-bound state. In Homo sapiens (Human), this protein is Rho GTPase-activating protein 20 (ARHGAP20).